A 123-amino-acid chain; its full sequence is Ribosome-binding factor A (123 aa).

Belongs to the RbfA family. Monomer. Binds 30S ribosomal subunits, but not 50S ribosomal subunits or 70S ribosomes.

The protein localises to the cytoplasm. Its function is as follows. One of several proteins that assist in the late maturation steps of the functional core of the 30S ribosomal subunit. Associates with free 30S ribosomal subunits (but not with 30S subunits that are part of 70S ribosomes or polysomes). Required for efficient processing of 16S rRNA. May interact with the 5'-terminal helix region of 16S rRNA. In Lactobacillus gasseri (strain ATCC 33323 / DSM 20243 / BCRC 14619 / CIP 102991 / JCM 1131 / KCTC 3163 / NCIMB 11718 / NCTC 13722 / AM63), this protein is Ribosome-binding factor A.